A 149-amino-acid chain; its full sequence is 3-hydroxyacyl-[acyl-carrier-protein] dehydratase FabZ (149 aa).

His-49 is a catalytic residue.

The protein belongs to the thioester dehydratase family. FabZ subfamily.

It is found in the cytoplasm. The catalysed reaction is a (3R)-hydroxyacyl-[ACP] = a (2E)-enoyl-[ACP] + H2O. Functionally, involved in unsaturated fatty acids biosynthesis. Catalyzes the dehydration of short chain beta-hydroxyacyl-ACPs and long chain saturated and unsaturated beta-hydroxyacyl-ACPs. In Sulfurovum sp. (strain NBC37-1), this protein is 3-hydroxyacyl-[acyl-carrier-protein] dehydratase FabZ.